Consider the following 225-residue polypeptide: Protein-L-isoaspartate O-methyltransferase (225 aa).

Ser-75 is a catalytic residue.

This sequence belongs to the methyltransferase superfamily. L-isoaspartyl/D-aspartyl protein methyltransferase family.

The protein resides in the cytoplasm. The catalysed reaction is [protein]-L-isoaspartate + S-adenosyl-L-methionine = [protein]-L-isoaspartate alpha-methyl ester + S-adenosyl-L-homocysteine. In terms of biological role, catalyzes the methyl esterification of L-isoaspartyl residues in peptides and proteins that result from spontaneous decomposition of normal L-aspartyl and L-asparaginyl residues. It plays a role in the repair and/or degradation of damaged proteins. This is Protein-L-isoaspartate O-methyltransferase from Xanthomonas axonopodis pv. citri (strain 306).